We begin with the raw amino-acid sequence, 391 residues long: Matrix metalloproteinase-23 (391 aa).

Residues 1–18 (MGCRACLRPEASGAVQGR) are Cytoplasmic-facing. Positions 1–79 (MGCRACLRPE…LTMSVTRRRR (79 aa)) are excised as a propeptide. A helical membrane pass occupies residues 19–39 (WLGAALSGLCLLSALALLEWL). Residues 40-391 (GAPTETAWRA…TYSWRVRVRN (352 aa)) are Lumenal-facing. N-linked (GlcNAc...) asparagine glycosylation is found at N93 and N149. Residue H212 participates in Zn(2+) binding. The active site involves E213. 2 residues coordinate Zn(2+): H216 and H222. N-linked (GlcNAc...) asparagine glycosylation occurs at N233. The 35-residue stretch at 256 to 290 (CLDRIFVCASWARKGFCDVRQRLMKRLCPRSCDFC) folds into the ShKT domain. Cystine bridges form between C256–C290, C263–C283, and C272–C287. Residues 298–383 (VATTTSPTRT…RRHQRVLSTY (86 aa)) enclose the Ig-like C2-type domain. N317 carries an N-linked (GlcNAc...) asparagine glycan. Cysteines 322 and 371 form a disulfide.

Belongs to the peptidase M10A family. The cofactor is Zn(2+). In terms of processing, N-glycosylated. Proteolytic cleavage might yield an active form. As to expression, expressed at relatively high level in heart, lung and spleen. Not detected in brain, liver, skeletal muscle, kidney and testis.

The protein resides in the endoplasmic reticulum membrane. It localises to the membrane. Inhibited by TIMP2. Functionally, protease. May regulate the surface expression of some potassium channels by retaining them in the endoplasmic reticulum. This chain is Matrix metalloproteinase-23 (Mmp23), found in Mus musculus (Mouse).